The primary structure comprises 311 residues: 4-hydroxy-3-methylbut-2-enyl diphosphate reductase (311 aa).

A [4Fe-4S] cluster-binding site is contributed by Cys-12. Positions 41 and 74 each coordinate (2E)-4-hydroxy-3-methylbut-2-enyl diphosphate. Dimethylallyl diphosphate is bound by residues His-41 and His-74. Isopentenyl diphosphate contacts are provided by His-41 and His-74. Cys-96 lines the [4Fe-4S] cluster pocket. (2E)-4-hydroxy-3-methylbut-2-enyl diphosphate is bound at residue His-124. His-124 contributes to the dimethylallyl diphosphate binding site. His-124 serves as a coordination point for isopentenyl diphosphate. Catalysis depends on Glu-126, which acts as the Proton donor. Thr-167 is a (2E)-4-hydroxy-3-methylbut-2-enyl diphosphate binding site. [4Fe-4S] cluster is bound at residue Cys-197. (2E)-4-hydroxy-3-methylbut-2-enyl diphosphate-binding residues include Ser-225, Ser-226, Asn-227, and Ser-269. 4 residues coordinate dimethylallyl diphosphate: Ser-225, Ser-226, Asn-227, and Ser-269. Residues Ser-225, Ser-226, Asn-227, and Ser-269 each coordinate isopentenyl diphosphate.

This sequence belongs to the IspH family. [4Fe-4S] cluster serves as cofactor.

The enzyme catalyses isopentenyl diphosphate + 2 oxidized [2Fe-2S]-[ferredoxin] + H2O = (2E)-4-hydroxy-3-methylbut-2-enyl diphosphate + 2 reduced [2Fe-2S]-[ferredoxin] + 2 H(+). It carries out the reaction dimethylallyl diphosphate + 2 oxidized [2Fe-2S]-[ferredoxin] + H2O = (2E)-4-hydroxy-3-methylbut-2-enyl diphosphate + 2 reduced [2Fe-2S]-[ferredoxin] + 2 H(+). It functions in the pathway isoprenoid biosynthesis; dimethylallyl diphosphate biosynthesis; dimethylallyl diphosphate from (2E)-4-hydroxy-3-methylbutenyl diphosphate: step 1/1. It participates in isoprenoid biosynthesis; isopentenyl diphosphate biosynthesis via DXP pathway; isopentenyl diphosphate from 1-deoxy-D-xylulose 5-phosphate: step 6/6. Functionally, catalyzes the conversion of 1-hydroxy-2-methyl-2-(E)-butenyl 4-diphosphate (HMBPP) into a mixture of isopentenyl diphosphate (IPP) and dimethylallyl diphosphate (DMAPP). Acts in the terminal step of the DOXP/MEP pathway for isoprenoid precursor biosynthesis. The polypeptide is 4-hydroxy-3-methylbut-2-enyl diphosphate reductase (Aeromonas salmonicida (strain A449)).